Reading from the N-terminus, the 1211-residue chain is RNA helicase Mov10l1 (1211 aa).

2 disordered regions span residues 340–385 and 674–710; these read KENS…GENG and WNHA…RVGD. Composition is skewed to polar residues over residues 345–372 and 674–688; these read DENI…NNRG and WNHA…QSTS. Residues 694-710 are compositionally biased toward basic and acidic residues; it reads TMTDQAEHGTEERRVGD. 770–777 contacts ATP; that stretch reads GPPGTGKT. A DEAG box motif is present at residues 886–889; the sequence is DEAG. A disordered region spans residues 1192–1211; that stretch reads DPSYPVVPESTGPEKHQEPS.

The protein belongs to the DNA2/NAM7 helicase family. SDE3 subfamily. Interacts with PIWIL1. Interacts with PIWIL2. Interacts with PIWIL4. Interacts with HSPA2. Interacts with PLD6. As to expression, specifically expressed in testis.

It is found in the cytoplasm. The enzyme catalyses ATP + H2O = ADP + phosphate + H(+). Its function is as follows. ATP-dependent RNA helicase required during spermatogenesis to repress transposable elements and prevent their mobilization, which is essential for germline integrity. Acts via the piRNA metabolic process, which mediates the repression of transposable elements during meiosis by forming complexes composed of piRNAs and Piwi proteins and governs the methylation and subsequent repression of transposons. Involved in the primary piRNA metabolic process. Specifically binds to piRNA precursors and promotes the generation of intermediate piRNA processing fragments that are subsequently loaded to Piwi proteins. Acts via its ATP-dependent RNA helicase activity: displays 5'-3' RNA unwinding activity and probably mediates unwinding and funneling of single-stranded piRNA precursor transcripts to the endonuclease that catalyzes the first cleavage step of piRNA processing to generate piRNA intermediate fragments that are subsequently loaded to Piwi proteins. This Homo sapiens (Human) protein is RNA helicase Mov10l1.